Here is a 293-residue protein sequence, read N- to C-terminus: Immediate early response gene 5-like protein (293 aa).

Belongs to the IER family.

The chain is Immediate early response gene 5-like protein (ier5l) from Xenopus laevis (African clawed frog).